The primary structure comprises 520 residues: NAD(P)H-quinone oxidoreductase subunit 2 (520 aa).

14 helical membrane passes run Ile15 to Leu35, Trp42 to Trp62, Leu79 to Ile99, Gly106 to Val126, Leu132 to Tyr152, Leu167 to Leu187, Leu210 to Ala230, Pro244 to Ile264, Phe280 to Gln300, Met306 to Thr326, Ile334 to Phe354, Leu378 to Gly398, Ile400 to Val420, and Val466 to Phe486.

This sequence belongs to the complex I subunit 2 family. As to quaternary structure, NDH-1 can be composed of about 15 different subunits; different subcomplexes with different compositions have been identified which probably have different functions.

Its subcellular location is the cellular thylakoid membrane. The catalysed reaction is a plastoquinone + NADH + (n+1) H(+)(in) = a plastoquinol + NAD(+) + n H(+)(out). It carries out the reaction a plastoquinone + NADPH + (n+1) H(+)(in) = a plastoquinol + NADP(+) + n H(+)(out). Functionally, NDH-1 shuttles electrons from an unknown electron donor, via FMN and iron-sulfur (Fe-S) centers, to quinones in the respiratory and/or the photosynthetic chain. The immediate electron acceptor for the enzyme in this species is believed to be plastoquinone. Couples the redox reaction to proton translocation, and thus conserves the redox energy in a proton gradient. Cyanobacterial NDH-1 also plays a role in inorganic carbon-concentration. In Nostoc sp. (strain PCC 7120 / SAG 25.82 / UTEX 2576), this protein is NAD(P)H-quinone oxidoreductase subunit 2.